A 351-amino-acid polypeptide reads, in one-letter code: Peptide chain release factor 1 (351 aa).

The residue at position 229 (Q229) is an N5-methylglutamine.

This sequence belongs to the prokaryotic/mitochondrial release factor family. Methylated by PrmC. Methylation increases the termination efficiency of RF1.

The protein resides in the cytoplasm. Peptide chain release factor 1 directs the termination of translation in response to the peptide chain termination codons UAG and UAA. The chain is Peptide chain release factor 1 from Ruegeria pomeroyi (strain ATCC 700808 / DSM 15171 / DSS-3) (Silicibacter pomeroyi).